Reading from the N-terminus, the 439-residue chain is Arginine biosynthesis bifunctional protein ArgJ, mitochondrial (439 aa).

Positions 175, 201, 212, 301, 434, and 439 each coordinate substrate. The active-site Nucleophile is the Thr-212.

Belongs to the ArgJ family. Heterodimer of an alpha and a beta chain. The alpha and beta chains are autoproteolytically processed from a single precursor protein within the mitochondrion.

The protein resides in the mitochondrion matrix. The enzyme catalyses N(2)-acetyl-L-ornithine + L-glutamate = N-acetyl-L-glutamate + L-ornithine. The catalysed reaction is L-glutamate + acetyl-CoA = N-acetyl-L-glutamate + CoA + H(+). Its pathway is amino-acid biosynthesis; L-arginine biosynthesis; L-ornithine and N-acetyl-L-glutamate from L-glutamate and N(2)-acetyl-L-ornithine (cyclic): step 1/1. It functions in the pathway amino-acid biosynthesis; L-arginine biosynthesis; N(2)-acetyl-L-ornithine from L-glutamate: step 1/4. In terms of biological role, catalyzes two activities which are involved in the cyclic version of arginine biosynthesis: the synthesis of acetylglutamate from glutamate and acetyl-CoA, and of ornithine by transacetylation between acetylornithine and glutamate. This Candida albicans (strain WO-1) (Yeast) protein is Arginine biosynthesis bifunctional protein ArgJ, mitochondrial.